Here is a 500-residue protein sequence, read N- to C-terminus: Protein DML1 (500 aa).

It belongs to the misato family.

The protein resides in the mitochondrion. In terms of biological role, involved in the partitioning of the mitochondrial organelle and mitochondrial DNA (mtDNA) inheritance. This chain is Protein DML1 (DML1), found in Scheffersomyces stipitis (strain ATCC 58785 / CBS 6054 / NBRC 10063 / NRRL Y-11545) (Yeast).